Here is a 400-residue protein sequence, read N- to C-terminus: CCA-adding enzyme (400 aa).

Gly-28 and Arg-31 together coordinate ATP. Residues Gly-28 and Arg-31 each coordinate CTP. The Mg(2+) site is built by Asp-41 and Asp-43. Residues Arg-112, Asp-155, Arg-158, Arg-161, and Arg-164 each coordinate ATP. CTP-binding residues include Arg-112, Asp-155, Arg-158, Arg-161, and Arg-164.

It belongs to the tRNA nucleotidyltransferase/poly(A) polymerase family. Bacterial CCA-adding enzyme type 3 subfamily. In terms of assembly, homodimer. It depends on Mg(2+) as a cofactor.

The enzyme catalyses a tRNA precursor + 2 CTP + ATP = a tRNA with a 3' CCA end + 3 diphosphate. It carries out the reaction a tRNA with a 3' CCA end + 2 CTP + ATP = a tRNA with a 3' CCACCA end + 3 diphosphate. In terms of biological role, catalyzes the addition and repair of the essential 3'-terminal CCA sequence in tRNAs without using a nucleic acid template. Adds these three nucleotides in the order of C, C, and A to the tRNA nucleotide-73, using CTP and ATP as substrates and producing inorganic pyrophosphate. tRNA 3'-terminal CCA addition is required both for tRNA processing and repair. Also involved in tRNA surveillance by mediating tandem CCA addition to generate a CCACCA at the 3' terminus of unstable tRNAs. While stable tRNAs receive only 3'-terminal CCA, unstable tRNAs are marked with CCACCA and rapidly degraded. The protein is CCA-adding enzyme of Staphylococcus haemolyticus (strain JCSC1435).